We begin with the raw amino-acid sequence, 85 residues long: Defensin-like protein 76 (85 aa).

Positions 1–27 (MQNQKHSHILTAITIVLLFAMAAKINA) are cleaved as a signal peptide. 4 disulfides stabilise this stretch: Cys35-Cys70, Cys40-Cys59, Cys44-Cys68, and Cys48-Cys69.

This sequence belongs to the DEFL family.

Its subcellular location is the secreted. This Arabidopsis thaliana (Mouse-ear cress) protein is Defensin-like protein 76 (LCR86).